Reading from the N-terminus, the 127-residue chain is Large ribosomal subunit protein eL32B (127 aa).

Belongs to the eukaryotic ribosomal protein eL32 family. In terms of assembly, component of the large ribosomal subunit (LSU). Mature yeast ribosomes consist of a small (40S) and a large (60S) subunit. The 40S small subunit contains 1 molecule of ribosomal RNA (18S rRNA) and at least 33 different proteins. The large 60S subunit contains 3 rRNA molecules (25S, 5.8S and 5S rRNA) and at least 46 different proteins.

It is found in the cytoplasm. Its subcellular location is the nucleus. The protein resides in the nucleolus. Functionally, component of the ribosome, a large ribonucleoprotein complex responsible for the synthesis of proteins in the cell. The small ribosomal subunit (SSU) binds messenger RNAs (mRNAs) and translates the encoded message by selecting cognate aminoacyl-transfer RNA (tRNA) molecules. The large subunit (LSU) contains the ribosomal catalytic site termed the peptidyl transferase center (PTC), which catalyzes the formation of peptide bonds, thereby polymerizing the amino acids delivered by tRNAs into a polypeptide chain. The nascent polypeptides leave the ribosome through a tunnel in the LSU and interact with protein factors that function in enzymatic processing, targeting, and the membrane insertion of nascent chains at the exit of the ribosomal tunnel. This is Large ribosomal subunit protein eL32B (rpl3201) from Schizosaccharomyces pombe (strain 972 / ATCC 24843) (Fission yeast).